The chain runs to 424 residues: Enolase (424 aa).

A (2R)-2-phosphoglycerate-binding site is contributed by Gln165. The active-site Proton donor is Glu207. Positions 244, 283, and 310 each coordinate Mg(2+). The (2R)-2-phosphoglycerate site is built by Lys335, Arg364, Ser365, and Lys386. Residue Lys335 is the Proton acceptor of the active site.

Belongs to the enolase family. Mg(2+) serves as cofactor.

The protein resides in the cytoplasm. The protein localises to the secreted. Its subcellular location is the cell surface. It carries out the reaction (2R)-2-phosphoglycerate = phosphoenolpyruvate + H2O. It functions in the pathway carbohydrate degradation; glycolysis; pyruvate from D-glyceraldehyde 3-phosphate: step 4/5. Catalyzes the reversible conversion of 2-phosphoglycerate (2-PG) into phosphoenolpyruvate (PEP). It is essential for the degradation of carbohydrates via glycolysis. The sequence is that of Enolase from Chlamydia trachomatis serovar L2 (strain ATCC VR-902B / DSM 19102 / 434/Bu).